Here is a 503-residue protein sequence, read N- to C-terminus: Probable cytosol aminopeptidase (503 aa).

2 residues coordinate Mn(2+): Lys-270 and Asp-275. The active site involves Lys-282. 3 residues coordinate Mn(2+): Asp-293, Asp-352, and Glu-354. Residue Arg-356 is part of the active site.

This sequence belongs to the peptidase M17 family. Mn(2+) serves as cofactor.

Its subcellular location is the cytoplasm. It carries out the reaction Release of an N-terminal amino acid, Xaa-|-Yaa-, in which Xaa is preferably Leu, but may be other amino acids including Pro although not Arg or Lys, and Yaa may be Pro. Amino acid amides and methyl esters are also readily hydrolyzed, but rates on arylamides are exceedingly low.. It catalyses the reaction Release of an N-terminal amino acid, preferentially leucine, but not glutamic or aspartic acids.. Presumably involved in the processing and regular turnover of intracellular proteins. Catalyzes the removal of unsubstituted N-terminal amino acids from various peptides. The protein is Probable cytosol aminopeptidase of Erwinia tasmaniensis (strain DSM 17950 / CFBP 7177 / CIP 109463 / NCPPB 4357 / Et1/99).